Here is a 699-residue protein sequence, read N- to C-terminus: Integrator complex subunit 10 (699 aa).

2 positions are modified to phosphoserine: serine 220 and serine 370. Residue lysine 453 forms a Glycyl lysine isopeptide (Lys-Gly) (interchain with G-Cter in SUMO2) linkage.

Belongs to the Integrator subunit 10 family. In terms of assembly, component of the Integrator complex, composed of core subunits INTS1, INTS2, INTS3, INTS4, INTS5, INTS6, INTS7, INTS8, INTS9/RC74, INTS10, INTS11/CPSF3L, INTS12, INTS13, INTS14 and INTS15. The core complex associates with protein phosphatase 2A subunits PPP2CA and PPP2R1A, to form the Integrator-PP2A (INTAC) complex. INTS10 is part of the tail subcomplex, composed of INTS10, INTS13, INTS14 and INTS15.

It localises to the nucleus. Functionally, component of the integrator complex, a multiprotein complex that terminates RNA polymerase II (Pol II) transcription in the promoter-proximal region of genes. The integrator complex provides a quality checkpoint during transcription elongation by driving premature transcription termination of transcripts that are unfavorably configured for transcriptional elongation: the complex terminates transcription by (1) catalyzing dephosphorylation of the C-terminal domain (CTD) of Pol II subunit POLR2A/RPB1 and SUPT5H/SPT5, (2) degrading the exiting nascent RNA transcript via endonuclease activity and (3) promoting the release of Pol II from bound DNA. The integrator complex is also involved in terminating the synthesis of non-coding Pol II transcripts, such as enhancer RNAs (eRNAs), small nuclear RNAs (snRNAs), telomerase RNAs and long non-coding RNAs (lncRNAs). Within the integrator complex, INTS10 is part of the integrator tail module that acts as a platform for the recruitment of transcription factors at promoters. May be not involved in the recruitment of cytoplasmic dynein to the nuclear envelope, probably as component of the integrator complex. The polypeptide is Integrator complex subunit 10 (INTS10) (Macaca fascicularis (Crab-eating macaque)).